Here is a 224-residue protein sequence, read N- to C-terminus: Urease accessory protein UreF (224 aa).

It belongs to the UreF family. In terms of assembly, ureD, UreF and UreG form a complex that acts as a GTP-hydrolysis-dependent molecular chaperone, activating the urease apoprotein by helping to assemble the nickel containing metallocenter of UreC. The UreE protein probably delivers the nickel.

The protein resides in the cytoplasm. In terms of biological role, required for maturation of urease via the functional incorporation of the urease nickel metallocenter. The protein is Urease accessory protein UreF of Pseudomonas savastanoi pv. phaseolicola (strain 1448A / Race 6) (Pseudomonas syringae pv. phaseolicola (strain 1448A / Race 6)).